We begin with the raw amino-acid sequence, 315 residues long: Acetyl-coenzyme A carboxylase carboxyl transferase subunit beta, chloroplastic (315 aa).

One can recognise a CoA carboxyltransferase N-terminal domain in the interval 47-315 (LWTRCDSCEN…VYKESNSYLF (269 aa)). 4 residues coordinate Zn(2+): Cys51, Cys54, Cys70, and Cys73. The segment at 51 to 73 (CDSCENMLYVRFLKQNKRICEEC) adopts a C4-type zinc-finger fold.

Belongs to the AccD/PCCB family. As to quaternary structure, acetyl-CoA carboxylase is a heterohexamer composed of biotin carboxyl carrier protein, biotin carboxylase and 2 subunits each of ACCase subunit alpha and ACCase plastid-coded subunit beta (accD). Zn(2+) is required as a cofactor.

It localises to the plastid. It is found in the chloroplast stroma. It carries out the reaction N(6)-carboxybiotinyl-L-lysyl-[protein] + acetyl-CoA = N(6)-biotinyl-L-lysyl-[protein] + malonyl-CoA. Its pathway is lipid metabolism; malonyl-CoA biosynthesis; malonyl-CoA from acetyl-CoA: step 1/1. Component of the acetyl coenzyme A carboxylase (ACC) complex. Biotin carboxylase (BC) catalyzes the carboxylation of biotin on its carrier protein (BCCP) and then the CO(2) group is transferred by the transcarboxylase to acetyl-CoA to form malonyl-CoA. This chain is Acetyl-coenzyme A carboxylase carboxyl transferase subunit beta, chloroplastic, found in Physcomitrium patens (Spreading-leaved earth moss).